The primary structure comprises 493 residues: Maintenance of mitochondrial morphology protein 1 (493 aa).

Topologically, residues 1–23 are lumenal; sequence MSQHSQYGVPGVPAQSSLSFTQG. The chain crosses the membrane as a helical span at residues 24–44; that stretch reads FLLGQLSVVLLIGAFIKFFIF. At 45–493 the chain is on the cytoplasmic side; that stretch reads GEAPAPPSRG…GSMPRVVRTP (449 aa). The tract at residues 52 to 104 is disordered; it reads SRGLASRTASHHRSYSINQGDNNANNNTNNGSSPRTLREKPSTSNVLRPVPSS. A compositionally biased stretch (low complexity) spans 69 to 81; that stretch reads NQGDNNANNNTNN. A compositionally biased stretch (polar residues) spans 93–104; it reads STSNVLRPVPSS. An SMP-LTD domain is found at 140–391; that stretch reads QPESLDWFNV…EPRVQVVGLP (252 aa). A disordered region spans residues 420 to 493; sequence SSRSGGGPVE…GSMPRVVRTP (74 aa).

It belongs to the MMM1 family. In terms of assembly, homodimer. Component of the ER-mitochondria encounter structure (ERMES) or MDM complex, composed of mmm1, mdm10, mdm12 and mdm34. A mmm1 homodimer associates with one molecule of mdm12 on each side in a pairwise head-to-tail manner, and the SMP-LTD domains of mmm1 and mdm12 generate a continuous hydrophobic tunnel for phospholipid trafficking.

Its subcellular location is the endoplasmic reticulum membrane. Functionally, component of the ERMES/MDM complex, which serves as a molecular tether to connect the endoplasmic reticulum (ER) and mitochondria. Components of this complex are involved in the control of mitochondrial shape and protein biogenesis, and function in nonvesicular lipid trafficking between the ER and mitochondria. The mdm12-mmm1 subcomplex functions in the major beta-barrel assembly pathway that is responsible for biogenesis of all outer membrane beta-barrel proteins, and acts in a late step after the SAM complex. The mdm10-mdm12-mmm1 subcomplex further acts in the TOM40-specific pathway after the action of the mdm12-mmm1 complex. Essential for establishing and maintaining the structure of mitochondria and maintenance of mtDNA nucleoids. The polypeptide is Maintenance of mitochondrial morphology protein 1 (Talaromyces stipitatus (strain ATCC 10500 / CBS 375.48 / QM 6759 / NRRL 1006) (Penicillium stipitatum)).